The chain runs to 148 residues: Glutamate mutase sigma subunit (148 aa).

Positions 3-140 constitute a B12-binding domain; it reads NPTIVIGVIG…KRDIERVMQS (138 aa). Residues 13-17, histidine 16, 61-63, and 93-97 each bind adenosylcob(III)alamin; these read ADCHA, SSI, and NLVIG.

Belongs to the methylaspartate mutase GlmS subunit family. As to quaternary structure, heterotetramer composed of 2 epsilon subunits (GlmE) and 2 sigma subunits (GlmS). GlmE exists as a homodimer and GlmS as a monomer. The cofactor is adenosylcob(III)alamin.

The catalysed reaction is (2S,3S)-3-methyl-L-aspartate = L-glutamate. It participates in amino-acid degradation; L-glutamate degradation via mesaconate pathway; acetate and pyruvate from L-glutamate: step 1/4. Functionally, catalyzes the carbon skeleton rearrangement of L-glutamate to L-threo-3-methylaspartate ((2S,3S)-3-methylaspartate). This chain is Glutamate mutase sigma subunit, found in Yersinia enterocolitica serotype O:8 / biotype 1B (strain NCTC 13174 / 8081).